The chain runs to 408 residues: Tryptophan synthase beta chain (408 aa).

Lysine 103 carries the N6-(pyridoxal phosphate)lysine modification.

This sequence belongs to the TrpB family. As to quaternary structure, tetramer of two alpha and two beta chains. Requires pyridoxal 5'-phosphate as cofactor.

It catalyses the reaction (1S,2R)-1-C-(indol-3-yl)glycerol 3-phosphate + L-serine = D-glyceraldehyde 3-phosphate + L-tryptophan + H2O. Its pathway is amino-acid biosynthesis; L-tryptophan biosynthesis; L-tryptophan from chorismate: step 5/5. Its function is as follows. The beta subunit is responsible for the synthesis of L-tryptophan from indole and L-serine. The sequence is that of Tryptophan synthase beta chain from Koribacter versatilis (strain Ellin345).